The primary structure comprises 424 residues: ATP synthase subunit beta, mitochondrial (424 aa).

The N-terminal 60 residues, 1–60 (MFRLSSGLLKGGACASRSRIPQLGRSLYSTATSAGADKTQGKIHTVIGAVVDVQFNHGRL), are a transit peptide targeting the mitochondrion. Residues 187–194 (GGAGVGKT), 188–195 (GAGVGKTV), 219–220 (ER), and Tyr374 each bind ATP.

This sequence belongs to the ATPase alpha/beta chains family. F-type ATPases have 2 components, CF(1) - the catalytic core - and CF(0) - the membrane proton channel. CF(1) has five subunits: alpha(3), beta(3), gamma(1), delta(1), epsilon(1). CF(0) has three main subunits: a, b and c.

It localises to the mitochondrion. The protein localises to the mitochondrion inner membrane. It carries out the reaction ATP + H2O + 4 H(+)(in) = ADP + phosphate + 5 H(+)(out). Functionally, ATP synthase subunit beta; part of the gene cluster that mediates the biosynthesis of citreoviridin, an inhibitor of the of F1-ATPase beta-subunit. Mitochondrial membrane ATP synthase (F(1)F(0) ATP synthase or Complex V) produces ATP from ADP in the presence of a proton gradient across the membrane which is generated by electron transport complexes of the respiratory chain. Whereas ctvA to ctvD constitute the core biosynthetic gene cluster, ctvE acts as a self-resistance gene. This chain is ATP synthase subunit beta, mitochondrial, found in Aspergillus terreus (strain NIH 2624 / FGSC A1156).